Here is a 330-residue protein sequence, read N- to C-terminus: Aquaporin-3 (330 aa).

Residues 1 to 40 (MSATPIIHLRDVKKRTGVLNAWERVRNKPQVHWAMECFAE) lie on the Cytoplasmic side of the membrane. The chain crosses the membrane as a helical span at residues 41–61 (ALGVFFYVYFGLGSTAAWVIG). Over 62 to 71 (NILKQSGLSS) the chain is Extracellular. Residues 72–92 (VFQIGFAYAFGILFAIGVCAA) form a helical membrane-spanning segment. Residues 93 to 124 (TSGGHFNPCVTIAFTIFRGFPPLKAVRYIVAQ) lie on the Cytoplasmic side of the membrane. The short motif at 99–101 (NPC) is the NPA 1 element. Residues 125–145 (ILGAYIASALVYNQWKVLIVE) form a helical membrane-spanning segment. Topologically, residues 146-157 (SELLLKQAGVYE) are extracellular. A helical membrane pass occupies residues 158–178 (TTMFTPNGPAGIFALYLLPGA). Residues 179–183 (QTLPR) are Cytoplasmic-facing. The helical transmembrane segment at 184–204 (AFLNEFVNCFVLALVIWAALD) threads the bilayer. Topologically, residues 205–207 (PTS) are extracellular. A helical membrane pass occupies residues 208-228 (FMIPPVMAPFIIAAAYAGSIW). Residues 229–264 (GYAVPAISLNSARDIGCRLFALTIWGKSAAGGSYSA) lie on the Cytoplasmic side of the membrane. Residues 238-240 (NSA) carry the NPA 2 motif. The helical transmembrane segment at 265-285 (IAALVNIPATLLAAVVYELFL) threads the bilayer. At 286-330 (VDSDRVVAGSHLEFMNVAANHRRHRQQAEDDNLVEADDSSQEKPV) the chain is on the extracellular side. A disordered region spans residues 308–330 (RHRQQAEDDNLVEADDSSQEKPV). The segment covering 314–324 (EDDNLVEADDS) has biased composition (acidic residues).

This sequence belongs to the MIP/aquaporin (TC 1.A.8) family.

It localises to the cell membrane. The enzyme catalyses H2O(in) = H2O(out). The catalysed reaction is CO2(out) = CO2(in). Water channel required to facilitate the transport of water across membranes. Also mediates the transport of carbon dioxide across the membrane. This Laccaria bicolor (Bicoloured deceiver) protein is Aquaporin-3.